A 776-amino-acid chain; its full sequence is MEIPFGSCLYSCLALLVLLPSLSLAQYESWPYQLQYPEYFQQPPPEHHQHQVPSDVVKIQVRLAGQKRKHNEGRVEVYYEGQWGTVCDDDFSIHAAHVVCREVGYVEAKSWTASSSYGPGEGPIWLDNIYCTGKESTLAACSSNGWGVTDCKHPEDVGVVCSEKRIPGFKFDNSLINQIESLNIQVEDIRIRPILSAFRHRKPVTEGYVEVKEGKAWKQICDKHWTAKNSHVVCGMFGFPAEKTYNPKAYKTFASRRKLRYWKFSMNCTGTEAHISSCKLGPPMFRDPVKNATCENGQPAVVSCVPSQIFSPDGPSRFRKAYKPEQPLVRLRGGAQVGEGRVEVLKNGEWGTVCDDKWDLVSASVVCRELGFGTAKEAVTGSRLGQGIGPIHLNEVQCTGTEKSIIDCKLNTESQGCNHEEDAGVRCNIPIMGFQKKVRLNGGRNPYEGRVEVLTERNGSLVWGNVCGQNWGIVEAMVVCRQLGLGFASNAFQETWYWHGNIFANKVIMSGVKCSGTELSLAHCRHDEEVVCPEGGVQYGAGVACSETAPDLVLNAEIVQQTAYLEDRPMALLQCAMEENCLSASAVHTDPTRGHRRLLRFSSQIHNNGQSDFRPKNGRHAWIWHDCHRHYHSMEVFTYYDLLSLNGTKVAEGHKASFCLEDTECEGDIQKSYECANFGEQGITMGCWDMYRHDIDCQWIDITDVPPGDYLFQVVINPNYEVPESDFSNNIMKCRSRYDGYRIWMYNCHVGGAFSEETEQKFEHFSGLLNNQLSVQ.

A signal peptide spans methionine 1 to alanine 25. SRCR domains are found at residues valine 61–serine 162, isoleucine 191–valine 305, valine 329–asparagine 428, and valine 438–serine 546. Disulfide bonds link cysteine 87-cysteine 151, cysteine 100-cysteine 161, cysteine 131-cysteine 141, cysteine 221-cysteine 294, cysteine 234-cysteine 304, cysteine 268-cysteine 278, cysteine 354-cysteine 417, cysteine 367-cysteine 427, and cysteine 398-cysteine 408. Residue asparagine 267 is glycosylated (N-linked (GlcNAc...) asparagine). Asparagine 291 carries an N-linked (GlcNAc...) asparagine glycan. An N-linked (GlcNAc...) asparagine glycan is attached at asparagine 458. 3 disulfides stabilise this stretch: cysteine 467–cysteine 532, cysteine 480–cysteine 545, and cysteine 514–cysteine 524. Positions proline 550 to alanine 753 are lysyl-oxidase like. The Ca(2+) site is built by aspartate 551 and leucine 552. Intrachain disulfides connect cysteine 575–cysteine 627, cysteine 581–cysteine 697, cysteine 659–cysteine 675, and cysteine 665–cysteine 687. Cu cation-binding residues include histidine 628, histidine 630, and histidine 632. N-linked (GlcNAc...) asparagine glycosylation occurs at asparagine 646. Residues lysine 655–tyrosine 691 constitute a cross-link (lysine tyrosylquinone (Lys-Tyr)). Tyrosine 691 is modified (2',4',5'-topaquinone). Ca(2+)-binding residues include glutamate 724, aspartate 726, asparagine 729, and asparagine 730. Cysteine 734 and cysteine 748 are oxidised to a cystine.

The protein belongs to the lysyl oxidase family. As to quaternary structure, component of some chromatin repressor complex. Interacts with SNAI1. Interacts with TAF10. Interacts with HSPA5. Interacts with EFEMP2. The cofactor is Cu cation. It depends on lysine tyrosylquinone residue as a cofactor. The lysine tyrosylquinone cross-link (LTQ) is generated by condensation of the epsilon-amino group of a lysine with a topaquinone produced by oxidation of tyrosine. In terms of processing, N-glycosylated. N-glycosylation on Asn-458 and Asn-646 may be essential for proper folding and secretion; may be composed of a fucosylated carbohydrates attached to a trimannose N-linked glycan core.

It localises to the secreted. The protein localises to the extracellular space. The protein resides in the extracellular matrix. Its subcellular location is the basement membrane. It is found in the nucleus. It localises to the chromosome. The protein localises to the endoplasmic reticulum. It catalyses the reaction L-lysyl-[protein] + O2 + H2O = (S)-2-amino-6-oxohexanoyl-[protein] + H2O2 + NH4(+). Specifically inhibited by a mouse monoclonal antibody AB0023, inhibition occurs in a non-competitive manner. Its function is as follows. Mediates the post-translational oxidative deamination of lysine residues on target proteins leading to the formation of deaminated lysine (allysine). Acts as a transcription corepressor and specifically mediates deamination of trimethylated 'Lys-4' of histone H3 (H3K4me3), a specific tag for epigenetic transcriptional activation. Shows no activity against histone H3 when it is trimethylated on 'Lys-9' (H3K9me3) or 'Lys-27' (H3K27me3) or when 'Lys-4' is monomethylated (H3K4me1) or dimethylated (H3K4me2). Also mediates deamination of methylated TAF10, a member of the transcription factor IID (TFIID) complex, which induces release of TAF10 from promoters, leading to inhibition of TFIID-dependent transcription. LOXL2-mediated deamination of TAF10 results in transcriptional repression of genes required for embryonic stem cell pluripotency including POU5F1/OCT4, NANOG, KLF4 and SOX2. Involved in epithelial to mesenchymal transition (EMT) via interaction with SNAI1 and participates in repression of E-cadherin CDH1, probably by mediating deamination of histone H3. During EMT, involved with SNAI1 in negatively regulating pericentromeric heterochromatin transcription. SNAI1 recruits LOXL2 to pericentromeric regions to oxidize histone H3 and repress transcription which leads to release of heterochromatin component CBX5/HP1A, enabling chromatin reorganization and acquisition of mesenchymal traits. Interacts with the endoplasmic reticulum protein HSPA5 which activates the IRE1-XBP1 pathway of the unfolded protein response, leading to expression of several transcription factors involved in EMT and subsequent EMT induction. When secreted into the extracellular matrix, promotes cross-linking of extracellular matrix proteins by mediating oxidative deamination of peptidyl lysine residues in precursors to fibrous collagen and elastin. Acts as a regulator of sprouting angiogenesis, probably via collagen IV scaffolding. Acts as a regulator of chondrocyte differentiation, probably by regulating expression of factors that control chondrocyte differentiation. The sequence is that of Lysyl oxidase homolog 2 (Loxl2) from Rattus norvegicus (Rat).